Consider the following 106-residue polypeptide: Small ribosomal subunit protein uS10 (106 aa).

It belongs to the universal ribosomal protein uS10 family. In terms of assembly, part of the 30S ribosomal subunit.

Functionally, involved in the binding of tRNA to the ribosomes. In Synechococcus sp. (strain RCC307), this protein is Small ribosomal subunit protein uS10.